The following is a 450-amino-acid chain: uncharacterized protein (450 aa).

12 consecutive transmembrane segments (helical) span residues Ile10–Ala30, Leu53–Ile73, Thr95–Ile115, Leu120–Asn140, Ala148–Phe168, Leu199–Thr219, Ile242–Ala262, Thr267–Phe287, Leu302–Ala322, Ile343–Phe363, Leu378–Gly398, and Val428–Met448.

It is found in the cell membrane. This is an uncharacterized protein from Haemophilus influenzae (strain ATCC 51907 / DSM 11121 / KW20 / Rd).